A 528-amino-acid chain; its full sequence is Protein spinster homolog 1 (528 aa).

The segment at 1–38 (MAGSDTAPFLSQADDPDDGPAPGHPGLPGPMGNPKSGE) is disordered. A2 is modified (N-acetylalanine). Transmembrane regions (helical) follow at residues 60–80 (LIVV…FTVA), 98–118 (GLIQ…FGYL), 126–146 (YLMC…SFIP), 160–180 (VGVG…DLFV), 187–207 (MLSI…IAGS), 218–238 (WALR…FLVV), 278–298 (LGFT…PAFL), 323–343 (LIFG…GVEI), 357–377 (LVCA…LACA), 381–401 (IVAT…NWAI), 421–441 (FQIV…IGLI), and 465–485 (MLCA…AMFI). A Phosphoserine modification is found at S518.

The protein belongs to the major facilitator superfamily. Spinster (TC 2.A.1.49) family. As to quaternary structure, interacts with BCL2 and BCL2L1. As to expression, expressed in liver (at mRNA and protein levels).

It localises to the lysosome membrane. The catalysed reaction is a 1-acyl-sn-glycero-3-phosphocholine(out) + H(+)(out) = a 1-acyl-sn-glycero-3-phosphocholine(in) + H(+)(in). It catalyses the reaction 1-hexadecanoyl-sn-glycero-3-phosphocholine(out) + H(+)(out) = 1-hexadecanoyl-sn-glycero-3-phosphocholine(in) + H(+)(in). It carries out the reaction 1-(9Z-octadecenoyl)-sn-glycero-3-phosphocholine(out) + H(+)(out) = 1-(9Z-octadecenoyl)-sn-glycero-3-phosphocholine(in) + H(+)(in). The enzyme catalyses 1-(5Z,8Z,11Z,14Z-eicosatetraenoyl)-sn-glycero-3-phosphocholine(out) + H(+)(out) = 1-(5Z,8Z,11Z,14Z-eicosatetraenoyl)-sn-glycero-3-phosphocholine(in) + H(+)(in). The catalysed reaction is 1-(4Z,7Z,10Z,13Z,16Z,19Z-docosahexaenoyl)-sn-glycero-3-phosphocholine(out) + H(+)(out) = 1-(4Z,7Z,10Z,13Z,16Z,19Z-docosahexaenoyl)-sn-glycero-3-phosphocholine(in) + H(+)(in). It catalyses the reaction a 1-acyl-sn-glycero-3-phosphoethanolamine(out) + H(+)(out) = a 1-acyl-sn-glycero-3-phosphoethanolamine(in) + H(+)(in). It carries out the reaction 1-(9Z-octadecenoyl)-sn-glycero-3-phosphoethanolamine(out) + H(+)(out) = 1-(9Z-octadecenoyl)-sn-glycero-3-phosphoethanolamine(in) + H(+)(in). The enzyme catalyses 1-acyl-sn-glycero-3-phospho-(1'-sn-glycerol)(out) + H(+)(out) = 1-acyl-sn-glycero-3-phospho-(1'-sn-glycerol)(in) + H(+)(in). The catalysed reaction is 1-(9Z-octadecenoyl)-sn-glycero-3-phospho-(1'-sn-glycerol)(out) + H(+)(out) = 1-(9Z-octadecenoyl)-sn-glycero-3-phospho-(1'-sn-glycerol)(in) + H(+)(in). It catalyses the reaction a 1-O-(1Z-alkenyl)-sn-glycero-3-phosphocholine(out) + H(+)(out) = a 1-O-(1Z-alkenyl)-sn-glycero-3-phosphocholine(in) + H(+)(in). It carries out the reaction 1-(1Z-hexadecenyl)-sn-glycero-3-phosphocholine(out) + H(+)(out) = 1-(1Z-hexadecenyl)-sn-glycero-3-phosphocholine(in) + H(+)(in). The enzyme catalyses a 1-O-(1Z-alkenyl)-sn-glycero-3-phosphoethanolamine(out) + H(+)(out) = a 1-O-(1Z-alkenyl)-sn-glycero-3-phosphoethanolamine(in) + H(+)(in). The catalysed reaction is 1-O-(1Z-hexadecenyl)-sn-glycero-3-phosphoethanolamine(out) + H(+)(out) = 1-O-(1Z-hexadecenyl)-sn-glycero-3-phosphoethanolamine(in) + H(+)(in). Functionally, plays a critical role in the phospholipid salvage pathway from lysosomes to the cytosol. Mediates the rate-limiting, proton-dependent, lysosomal efflux of lysophospholipids, which can then be reacylated by acyltransferases in the endoplasmic reticulum to form phospholipids. Selective for zwitterionic headgroups such as lysophosphatidylcholine (LPC) and lysophosphatidylethanolamine (LPE), can also transport lysophosphatidylglycerol (LPG), but not other anionic lysophospholipids, sphingosine, nor sphingomyelin. Transports lysophospholipids with saturated, monounsaturated, and polyunsaturated fatty acids, such as 1-hexadecanoyl-sn-glycero-3-phosphocholine, 1-(9Z-octadecenoyl)-sn-glycero-3-phosphocholine and 1-(4Z,7Z,10Z,13Z,16Z,19Z-docosahexaenoyl)-sn-glycero-3-phosphocholine, respectively. Can also transport lysoplasmalogen (LPC with a fatty alcohol) such as 1-(1Z-hexadecenyl)-sn-glycero-3-phosphocholine. Essential player in lysosomal homeostasis. Crucial for cell survival under conditions of nutrient limitation. May be involved in necrotic or autophagic cell death. The polypeptide is Protein spinster homolog 1 (Spns1) (Mus musculus (Mouse)).